Consider the following 437-residue polypeptide: 5-hydroxytryptamine receptor 3B (437 aa).

The signal sequence occupies residues 1–21 (MILLWSCLLVAVVGILGTATP). Residues 22–235 (QPGNSSLHRL…RFNVVIRRCP (214 aa)) are Extracellular-facing. Asn-25, Asn-92, and Asn-134 each carry an N-linked (GlcNAc...) asparagine glycan. The cysteines at positions 151 and 165 are disulfide-linked. The chain crosses the membrane as a helical span at residues 236 to 255 (LAYVVSLLIPSIFLMLVDLG). At 256 to 266 (SFYLPPNCRAR) the chain is on the cytoplasmic side. A helical membrane pass occupies residues 267 to 284 (IVFKTNVLVGYTVFRVNM). Topologically, residues 285–295 (SDEVPRSAGCT) are extracellular. A helical membrane pass occupies residues 296–324 (SLIGVFFTVCMALLVLSLSKSILLIKFLY). Residues 325-410 (EERHSEQERP…WLAILCHFDQ (86 aa)) lie on the Cytoplasmic side of the membrane. The tract at residues 377-409 (FWFQLQSINNSLRTRDQVYQKEVEWLAILCHFD) is HA-stretch; determines single-channel conductance in 5-HT3 receptors. A helical membrane pass occupies residues 411 to 434 (LLFRIYLAVLGLYTVTLCSLWALW). At 435 to 437 (SRM) the chain is on the extracellular side.

The protein belongs to the ligand-gated ion channel (TC 1.A.9) family. 5-hydroxytryptamine receptor (TC 1.A.9.2) subfamily. HTR3B sub-subfamily. As to quaternary structure, forms homopentameric as well as heteropentameric serotonin-activated cation-selective channel complexes with HTR3A. The homomeric complex is not functional. Heteropentameric complexes display properties which resemble that of neuronal serotonin-activated channels in vivo. In terms of processing, N-glycosylation is required for membrane localization. In terms of tissue distribution, expressed in peripheral neurons, but not in neurons of the central nervous system.

It is found in the postsynaptic cell membrane. It localises to the cell membrane. It catalyses the reaction Na(+)(in) = Na(+)(out). The enzyme catalyses K(+)(in) = K(+)(out). The catalysed reaction is Ca(2+)(in) = Ca(2+)(out). Its function is as follows. Forms serotonin (5-hydroxytryptamine/5-HT3)-activated cation-selective channel complexes, which when activated cause fast, depolarizing responses in neurons. The protein is 5-hydroxytryptamine receptor 3B of Rattus norvegicus (Rat).